We begin with the raw amino-acid sequence, 197 residues long: Large ribosomal subunit protein uL22 (197 aa).

Residues 118 to 197 form a disordered region; it reads ESRPAKDQRS…ETSAAKGGSD (80 aa). Residues 149–165 are compositionally biased toward low complexity; the sequence is APAKKAAAKAPAKKAPA. The segment covering 172 to 183 has biased composition (basic residues); sequence TPAKKAPAKKAP. Residues 184–197 show a composition bias toward low complexity; sequence AKASETSAAKGGSD.

The protein belongs to the universal ribosomal protein uL22 family. In terms of assembly, part of the 50S ribosomal subunit.

Functionally, this protein binds specifically to 23S rRNA; its binding is stimulated by other ribosomal proteins, e.g. L4, L17, and L20. It is important during the early stages of 50S assembly. It makes multiple contacts with different domains of the 23S rRNA in the assembled 50S subunit and ribosome. In terms of biological role, the globular domain of the protein is located near the polypeptide exit tunnel on the outside of the subunit, while an extended beta-hairpin is found that lines the wall of the exit tunnel in the center of the 70S ribosome. The polypeptide is Large ribosomal subunit protein uL22 (Mycobacterium bovis (strain ATCC BAA-935 / AF2122/97)).